The chain runs to 162 residues: MRLSFILAATLTGLLACATASDSEKIIRISNEQVLSDRQLLDTVVNDNEKRFLRAYNDAEDDSEDPKNVKNTVDAKPADESEDSELSEEERFSLIQMSNQPRYYWWFQHEMTPRDVRRALGLRAGSIKLVKRSIYRGYVKYYNKHCSYYENRKKDFCKAKEY.

An N-terminal signal peptide occupies residues Met-1–Ala-20. The RxLR-dEER motif lies at Arg-51 to Arg-91. Positions Tyr-56 to Glu-88 are disordered.

This sequence belongs to the RxLR effector family.

It localises to the secreted. The protein resides in the host cytoplasm. Its subcellular location is the host nucleus. It is found in the host nucleolus. In terms of biological role, effector that enhances P.infestans colonization of Nicotiana benthamiana leaves. This Phytophthora infestans (strain T30-4) (Potato late blight agent) protein is RxLR effector protein PITG_06094.